A 490-amino-acid polypeptide reads, in one-letter code: Cytochrome P450 2C6 (490 aa).

N6-acetyllysine is present on residues lysine 249 and lysine 375. Cysteine 435 contributes to the heme binding site.

The protein belongs to the cytochrome P450 family. Heme serves as cofactor.

Its subcellular location is the endoplasmic reticulum membrane. It localises to the microsome membrane. It catalyses the reaction an organic molecule + reduced [NADPH--hemoprotein reductase] + O2 = an alcohol + oxidized [NADPH--hemoprotein reductase] + H2O + H(+). Its function is as follows. Cytochromes P450 are a group of heme-thiolate monooxygenases. In liver microsomes, this enzyme is involved in an NADPH-dependent electron transport pathway. It oxidizes a variety of structurally unrelated compounds, including steroids, fatty acids, and xenobiotics. The sequence is that of Cytochrome P450 2C6 (Cyp2c6) from Rattus norvegicus (Rat).